The sequence spans 212 residues: Cell division protein SepF (212 aa).

The tract at residues arginine 32–glutamate 104 is disordered. The segment covering glutamate 64–glycine 73 has biased composition (acidic residues).

Belongs to the SepF family. In terms of assembly, homodimer. Interacts with FtsZ.

The protein localises to the cytoplasm. In terms of biological role, cell division protein that is part of the divisome complex and is recruited early to the Z-ring. Probably stimulates Z-ring formation, perhaps through the cross-linking of FtsZ protofilaments. Its function overlaps with FtsA. The sequence is that of Cell division protein SepF from Saccharopolyspora erythraea (strain ATCC 11635 / DSM 40517 / JCM 4748 / NBRC 13426 / NCIMB 8594 / NRRL 2338).